The following is a 605-amino-acid chain: uncharacterized protein (605 aa).

2 disordered regions span residues 10 to 78 (RRGG…FPPA) and 216 to 248 (RAPD…VRNP). Residues 20 to 48 (AGGRPAAGGRPAAGGRPAAGSRAAAGAAG) show a composition bias toward low complexity. The span at 220–233 (CPSPRTPMVKPPFR) shows a compositional bias: pro residues.

This is an uncharacterized protein from Dryophytes versicolor (chameleon treefrog).